A 223-amino-acid chain; its full sequence is Neurotrophic factor BDNF precursor form (223 aa).

The first 5 residues, 1 to 5 (SCMKA), serve as a signal peptide directing secretion. Positions 6–114 (APMKEVSIRG…AANMSMRVRR (109 aa)) are excised as a propeptide. N-linked (GlcNAc...) asparagine glycosylation is present at Asn-107. Intrachain disulfides connect Cys-127–Cys-194 and Cys-172–Cys-223.

Belongs to the NGF-beta family.

It localises to the secreted. Its function is as follows. Promotes the survival of neuronal populations that are all located either in the central nervous system or directly connected to it. In Boa constrictor (Boa), this protein is Neurotrophic factor BDNF precursor form (BDNF).